The chain runs to 315 residues: B3 domain-containing protein At1g05920 (315 aa).

A disordered region spans residues 24–129; sequence MISRDNQKKT…PQVASVPKSV (106 aa). Basic and acidic residues-rich tracts occupy residues 39–51, 66–83, and 100–114; these read VREE…EEMI, KEGK…DNRT, and FDHV…HAYL. Residues 204–306 constitute a DNA-binding region (TF-B3); the sequence is INTVIQNDFL…ILCFALVPPT (103 aa).

The protein resides in the nucleus. This chain is B3 domain-containing protein At1g05920, found in Arabidopsis thaliana (Mouse-ear cress).